Consider the following 577-residue polypeptide: Anthranilate synthase alpha subunit 1, chloroplastic (577 aa).

The N-terminal 34 residues, 1–34, are a transit peptide targeting the chloroplast; the sequence is MASLVLSLRIAPSTPPLGLGGGRFRGRRGAVACR.

Belongs to the anthranilate synthase component I family. In terms of assembly, heterotetramer consisting of two non-identical subunits: a beta subunit and a large alpha subunit.

It is found in the plastid. It localises to the chloroplast. The enzyme catalyses chorismate + L-glutamine = anthranilate + pyruvate + L-glutamate + H(+). The protein operates within amino-acid biosynthesis; L-tryptophan biosynthesis; L-tryptophan from chorismate: step 1/5. Feedback inhibition by tryptophan. In terms of biological role, part of a heterotetrameric complex that catalyzes the two-step biosynthesis of anthranilate, an intermediate in the biosynthesis of L-tryptophan. In the first step, the glutamine-binding beta subunit of anthranilate synthase (AS) provides the glutamine amidotransferase activity which generates ammonia as a substrate that, along with chorismate, is used in the second step, catalyzed by the large alpha subunit of AS to produce anthranilate. This chain is Anthranilate synthase alpha subunit 1, chloroplastic, found in Oryza sativa subsp. japonica (Rice).